A 334-amino-acid chain; its full sequence is Probable tRNA pseudouridine synthase B (334 aa).

The active-site Nucleophile is D82. In terms of domain architecture, PUA spans 250–325 (LPKIWIKDSA…IAVDVEKVFM (76 aa)).

Belongs to the pseudouridine synthase TruB family. Type 2 subfamily.

It catalyses the reaction uridine(55) in tRNA = pseudouridine(55) in tRNA. Could be responsible for synthesis of pseudouridine from uracil-55 in the psi GC loop of transfer RNAs. The chain is Probable tRNA pseudouridine synthase B from Pyrococcus horikoshii (strain ATCC 700860 / DSM 12428 / JCM 9974 / NBRC 100139 / OT-3).